The chain runs to 226 residues: Probable proteasome subunit beta type-1 (226 aa).

Positions 1 to 24 (MATTVKDTMNVDINAIKKGEIRMG) are cleaved as a propeptide — removed in mature form. T25 acts as the Nucleophile in catalysis.

The protein belongs to the peptidase T1B family. As to quaternary structure, the 26S proteasome consists of a 20S proteasome core and two 19S regulatory subunits. The 20S proteasome core is composed of 28 subunits that are arranged in four stacked rings, resulting in a barrel-shaped structure. The two end rings are each formed by seven alpha subunits, and the two central rings are each formed by seven beta subunits. The catalytic chamber with the active sites is on the inside of the barrel.

It is found in the cytoplasm. The protein localises to the nucleus. The enzyme catalyses Cleavage of peptide bonds with very broad specificity.. Functionally, the proteasome is a multicatalytic proteinase complex which is characterized by its ability to cleave peptides with Arg, Phe, Tyr, Leu, and Glu adjacent to the leaving group at neutral or slightly basic pH. The proteasome has an ATP-dependent proteolytic activity. This chain is Probable proteasome subunit beta type-1 (pre3), found in Schizosaccharomyces pombe (strain 972 / ATCC 24843) (Fission yeast).